Here is an 841-residue protein sequence, read N- to C-terminus: uncharacterized protein (841 aa).

The first 31 residues, 1 to 31 (MKIERYFKAIARAFIITFLFSLILQDNGVLA), serve as a signal peptide directing secretion.

It localises to the secreted. This is an uncharacterized protein from Schizosaccharomyces pombe (strain 972 / ATCC 24843) (Fission yeast).